The following is a 394-amino-acid chain: Gastricsin (394 aa).

Positions 1–16 (MKWMVVVLLCLPLLEA) are cleaved as a signal peptide. The propeptide at 17-65 (TQIKVPLKKIKSIREVLREKGLLGDFLKNHKPQHARKFFRNRLAKTGDF) is activation peptide. In terms of domain architecture, Peptidase A1 spans 79-391 (YFGQISLGTP…DLANNRVGFA (313 aa)). D97 is an active-site residue. Cystine bridges form between C110–C115 and C273–C277. Residue T283 is part of the active site. An intrachain disulfide couples C316 to C349.

Belongs to the peptidase A1 family.

It localises to the secreted. The catalysed reaction is More restricted specificity than pepsin A, but shows preferential cleavage at Tyr-|-Xaa bonds. High activity on hemoglobin.. In terms of biological role, hydrolyzes a variety of proteins. The sequence is that of Gastricsin (PGC) from Cavia porcellus (Guinea pig).